The sequence spans 135 residues: Mu-like prophage FluMu protein gp46 (135 aa).

It to phage Mu protein gp46.

The polypeptide is Mu-like prophage FluMu protein gp46 (Haemophilus influenzae (strain ATCC 51907 / DSM 11121 / KW20 / Rd)).